A 205-amino-acid polypeptide reads, in one-letter code: Probable nicotinate-nucleotide adenylyltransferase (205 aa).

Belongs to the NadD family.

It catalyses the reaction nicotinate beta-D-ribonucleotide + ATP + H(+) = deamido-NAD(+) + diphosphate. It participates in cofactor biosynthesis; NAD(+) biosynthesis; deamido-NAD(+) from nicotinate D-ribonucleotide: step 1/1. Its function is as follows. Catalyzes the reversible adenylation of nicotinate mononucleotide (NaMN) to nicotinic acid adenine dinucleotide (NaAD). This Arthrobacter sp. (strain FB24) protein is Probable nicotinate-nucleotide adenylyltransferase.